Here is a 694-residue protein sequence, read N- to C-terminus: Elongation factor G 2 (694 aa).

The tr-type G domain maps to 8-282 (TAIRNIGIMA…AVVSYLPSPL (275 aa)). GTP-binding positions include 17 to 24 (AHIDAGKT), 81 to 85 (DTPGH), and 135 to 138 (NKMD).

Belongs to the TRAFAC class translation factor GTPase superfamily. Classic translation factor GTPase family. EF-G/EF-2 subfamily.

Its subcellular location is the cytoplasm. Catalyzes the GTP-dependent ribosomal translocation step during translation elongation. During this step, the ribosome changes from the pre-translocational (PRE) to the post-translocational (POST) state as the newly formed A-site-bound peptidyl-tRNA and P-site-bound deacylated tRNA move to the P and E sites, respectively. Catalyzes the coordinated movement of the two tRNA molecules, the mRNA and conformational changes in the ribosome. This chain is Elongation factor G 2, found in Syntrophomonas wolfei subsp. wolfei (strain DSM 2245B / Goettingen).